A 394-amino-acid polypeptide reads, in one-letter code: Potassium channel subfamily K member 18 (394 aa).

Over 1–31 (MEAEEPPEARRCCPEALGKARGCCPEALGKL) the chain is Cytoplasmic. A helical membrane pass occupies residues 32 to 52 (LPGLCFLCCLVTYALVGAALF). N-linked (GlcNAc...) asparagine glycosylation occurs at asparagine 83. The pore-forming intramembrane region spans 114-140 (FLSALFFCCTVFSTVGYGHMYPVTRLG). Positions 127, 128, 129, and 130 each coordinate K(+). The interval 127 to 132 (TVGYGH) is selectivity filter 1. Residues 142 to 162 (FLCMLYALFGIPLMFLVLTDI) traverse the membrane as a helical segment. Residues 163 to 292 (GDILATILSR…EVGQQVERLD (130 aa)) lie on the Cytoplasmic side of the membrane. Residues 210–215 (PQIVID) are interaction with calcineurin. Residues 261 to 266 (RSNSCP) form an interaction with YWHAH region. A phosphoserine mark is found at serine 264 and serine 276. A helical membrane pass occupies residues 293–313 (IPLPVIALVVFAYISCAAAIL). The pore-forming intramembrane region spans 326-340 (FYFCFVTLTTIGFGD). Residues 335–340 (TIGFGD) form a selectivity filter 2 region. Residues 347 to 367 (HFFLFFSIYIIVGMEILFIAF) form a helical membrane-spanning segment. The Cytoplasmic segment spans residues 368 to 394 (KLMQNRLLHTYKTLMLFVCQREVSLPW).

This sequence belongs to the two pore domain potassium channel (TC 1.A.1.8) family. Homodimer. Heterodimer with KCNK2. Heterodimer with KCNK10. Interacts with calcineurin. Interacts with YWHAH, in a phosphorylation-dependent manner. Post-translationally, phosphorylation of Ser-264 is required for the binding of 14-3-3eta/YWHAH. Calcineurin-mediated dephosphorylation of Ser-276 enhances channel activity. In terms of processing, N-glycosylated. Detected in brain cortex, cerebellum, dorsal root ganglion, spinal cord and testis. High expression in trigeminal ganglion (at protein level), also expressed in autonomic nervous system ganglia such as the stellate ganglion and paravertebral sympathetic ganglia. Expressed in all adult spinal cord and brain regions, with slightly higher expression in thalamus, hypothalamus, hippocampus and posterior corte (at protein level). In non-neuronal tissues, substantial expression found in lung and heart and weal expression in liver, testis, kidney, small intestine and spleen. Expressed in regulatory T cells (at protein level).

Its subcellular location is the cell membrane. The enzyme catalyses K(+)(in) = K(+)(out). Activated upon cell stimulation via Ca(2+)-mobilizing receptors, such as CHRM1/M1 muscarinic receptor and AGTR1/AT1a angiotensin receptor. Activated by volatile anesthetics, such as isoflurane and inhibited by local anesthetics such as bupivacaine and lidocaine. Inhibited by extracellular acidic pH. Inhibited by Zn(2+) ions. Inhibited by hydroxy-alpha-sanshool, an ingredient of Schezuan pepper. Inhibited by Ba(2+) ions. In terms of biological role, k(+) channel that conducts outward and inward rectifying currents at depolarized and hyperpolarized membrane potentials, respectively. The outward rectifying currents are voltage-dependent, coupled to K(+) electrochemical gradient across the membrane, whereas the inward currents can be induced in response to activation of Ca(2+)-mobilizing receptors. Homo- and heterodimerizes to form functional channels with distinct regulatory and gating properties. In trigeminal ganglia sensory neurons, the heterodimers of KCNK18/TRESK and KCNK2/TREK-1 or KCNK10/TREK-2 inhibit neuronal firing and neurogenic inflammation by stabilizing the resting membrane potential at K(+) equilibrium potential as well as by regulating the threshold of action potentials and the spike frequency. In thymocytes, conducts K(+) currents upon T cell receptor (TCR) signaling leading to sustained Ca(2+) influx and NF-kappa-B activation, FOXP3 transcription and positive selection of regulatory T cell (Treg) progenitor subsets. Appears to mediate the analgesics effects of hydroxy-alpha-sanshool, a metabolite naturally present in Schezuan pepper and other Xanthoxylum plants. This Mus musculus (Mouse) protein is Potassium channel subfamily K member 18.